Consider the following 495-residue polypeptide: Pre-glycoprotein polyprotein GP complex (495 aa).

The N-myristoyl glycine; by host moiety is linked to residue Gly2. Over 2–17 the chain is Extracellular; it reads GQFISFMQEIPIFLQE. The chain crosses the membrane as a helical span at residues 18–33; it reads ALNIALVAVSLICIVK. Residues 34 to 58 lie on the Cytoplasmic side of the membrane; sequence GLVNLYRCGLFQLMVFLVLAGRSCS. Residue Cys57 coordinates Zn(2+). Residues 59 to 434 are Extracellular-facing; the sequence is EETFKIGMHT…QGRTPITLVD (376 aa). Intrachain disulfides connect Cys92–Cys236, Cys281–Cys294, Cys303–Cys312, and Cys366–Cys387. N-linked (GlcNAc...) asparagine; by host glycans are attached at residues Asn95 and Asn188. N-linked (GlcNAc...) asparagine; by host glycans are attached at residues Asn367, Asn375, Asn392, and Asn397. Residues 435 to 455 form a helical membrane-spanning segment; sequence ICFWSTVFFTSTLFLHLIGFP. The Cytoplasmic portion of the chain corresponds to 456–495; that stretch reads THEHIRGEGCPLPHRLNSMGGCRCGKYLPLKKPTIWHRRH. Positions 457, 459, 465, 469, 477, 479, and 495 each coordinate Zn(2+).

Belongs to the arenaviridae GPC protein family. As to quaternary structure, interacts with glycoprotein G2. Part of the GP complex (GP-C) together with glycoprotein G1 and glycoprotein G2. The GP-complex interacts with protein Z, which interacts with ribonucleocapsid; these interactions may induce virion budding. In terms of assembly, homotrimer; disulfide-linked. In pre-fusion state, G1 homotrimers bind G2 homotrimers via ionic interactions. Part of the GP complex (GP-C) together with glycoprotein G2 and the stable signal peptide. The GP-complex interacts with protein Z, which interacts with ribonucleocapsid; these interactions may induce virion budding. Homotrimer. Interacts with the stable signal peptide. In pre-fusion state, G2 homotrimers bind G1 homotrimers via ionic interactions. Part of the GP complex (GP-C) together with glycoprotein G1 and the stable signal peptide. Acidification in the endosome triggers rearrangements, which ultimately leads to a 6 helix bundle formed by the two heptad repeat domains (HR1 and HR2) in post-fusion state. The GP-complex interacts with protein Z, which interacts with ribonucleocapsid; these interactions may induce virion budding. In terms of processing, specific enzymatic cleavages in vivo yield mature proteins. GP-C polyprotein is cleaved in the endoplasmic reticulum by the host protease MBTPS1. Only cleaved glycoprotein is incorporated into virions. The SSP remains stably associated with the GP complex following cleavage by signal peptidase and plays crucial roles in the trafficking of GP through the secretory pathway. Post-translationally, myristoylation is necessary for GP2-mediated fusion activity.

The protein localises to the virion membrane. The protein resides in the host endoplasmic reticulum membrane. It is found in the host Golgi apparatus membrane. Its subcellular location is the host cell membrane. Its function is as follows. Functions as a cleaved signal peptide that is retained as the third component of the GP complex (GP-C). Helps to stabilize the spike complex in its native conformation. The SSP is required for efficient glycoprotein expression, post-translational maturation cleavage of G1 and G2, glycoprotein transport to the cell surface plasma membrane, formation of infectious virus particles, and acid pH-dependent glycoprotein-mediated cell fusion. In terms of biological role, forms the virion spikes together with glycoprotein G2. The glycoprotein spike trimers are connected to the underlying matrix. Interacts with the host receptor leading to virus endocytosis. Functionally, forms the virion spikes together with glycoprotein G1. The glycoprotein spike trimers are connected to the underlying matrix. Class I viral fusion protein that directs fusion of viral and host endosomal membranes, leading to delivery of the nucleocapsid into the cytoplasm. Membrane fusion is mediated by irreversible conformational changes induced by acidification. This is Pre-glycoprotein polyprotein GP complex from Tacaribe virus (strain Franze-Fernandez) (TCRV).